The chain runs to 354 residues: Heat-inducible transcription repressor HrcA (354 aa).

The protein belongs to the HrcA family.

Its function is as follows. Negative regulator of class I heat shock genes (grpE-dnaK-dnaJ and groELS operons). Prevents heat-shock induction of these operons. This Novosphingobium aromaticivorans (strain ATCC 700278 / DSM 12444 / CCUG 56034 / CIP 105152 / NBRC 16084 / F199) protein is Heat-inducible transcription repressor HrcA.